The sequence spans 68 residues: DNA-directed RNA polymerase subunit omega (68 aa).

Belongs to the RNA polymerase subunit omega family. As to quaternary structure, the RNAP catalytic core consists of 2 alpha, 1 beta, 1 beta' and 1 omega subunit. When a sigma factor is associated with the core the holoenzyme is formed, which can initiate transcription.

The catalysed reaction is RNA(n) + a ribonucleoside 5'-triphosphate = RNA(n+1) + diphosphate. Its function is as follows. Promotes RNA polymerase assembly. Latches the N- and C-terminal regions of the beta' subunit thereby facilitating its interaction with the beta and alpha subunits. This Desulfitobacterium hafniense (strain DSM 10664 / DCB-2) protein is DNA-directed RNA polymerase subunit omega.